The chain runs to 391 residues: Superoxide dismutase [Fe] 1, chloroplastic (391 aa).

The transit peptide at Met1 to Gln73 directs the protein to the chloroplast. Acidic residues predominate over residues Val87 to Ala119. Positions Val87–Ser120 are disordered. The Fe cation site is built by His148, His202, Asp301, and His305. The disordered stretch occupies residues Met370 to Val391. Residues Gln381 to Val391 are compositionally biased toward polar residues.

It belongs to the iron/manganese superoxide dismutase family. In terms of assembly, homodimer. Fe cation serves as cofactor.

It is found in the plastid. The protein localises to the chloroplast. It carries out the reaction 2 superoxide + 2 H(+) = H2O2 + O2. Functionally, destroys superoxide anion radicals which are normally produced within the cells and which are toxic to biological systems. The protein is Superoxide dismutase [Fe] 1, chloroplastic of Oryza sativa subsp. japonica (Rice).